The sequence spans 389 residues: Putative serine/threonine-protein kinase (389 aa).

The region spanning 15–356 is the Protein kinase domain; sequence YRIEKLINRG…LMVSNYLPWY (342 aa). The Proton acceptor role is filled by Asp164.

The protein belongs to the protein kinase superfamily. Ser/Thr protein kinase family.

The catalysed reaction is L-seryl-[protein] + ATP = O-phospho-L-seryl-[protein] + ADP + H(+). It catalyses the reaction L-threonyl-[protein] + ATP = O-phospho-L-threonyl-[protein] + ADP + H(+). The chain is Putative serine/threonine-protein kinase from Mycoplasma pneumoniae (strain ATCC 29342 / M129 / Subtype 1) (Mycoplasmoides pneumoniae).